Consider the following 355-residue polypeptide: Protein RecA (355 aa).

67 to 74 contacts ATP; sequence GPESSGKT.

This sequence belongs to the RecA family.

The protein resides in the cytoplasm. Its function is as follows. Can catalyze the hydrolysis of ATP in the presence of single-stranded DNA, the ATP-dependent uptake of single-stranded DNA by duplex DNA, and the ATP-dependent hybridization of homologous single-stranded DNAs. It interacts with LexA causing its activation and leading to its autocatalytic cleavage. The protein is Protein RecA of Histophilus somni (strain 129Pt) (Haemophilus somnus).